Consider the following 222-residue polypeptide: Interleukin-12 subunit alpha (222 aa).

An N-terminal signal peptide occupies residues 1–25 (MCPPRGLLLVAILVLLNHLDHLSLA). Intrachain disulfides connect cysteine 40–cysteine 113, cysteine 67–cysteine 199, and cysteine 88–cysteine 126. N-linked (GlcNAc...) asparagine glycans are attached at residues asparagine 42, asparagine 96, and asparagine 110.

The protein belongs to the IL-6 superfamily. As to quaternary structure, heterodimer with IL12B; disulfide-linked. This heterodimer is known as interleukin IL-12. Heterodimer with EBI3/IL27B; not disulfide-linked. This heterodimer is known as interleukin IL-35. Interacts with NBR1; this interaction promotes IL-12 secretion.

It is found in the secreted. Its function is as follows. Heterodimerizes with IL12B to form the IL-12 cytokine or with EBI3/IL27B to form the IL-35 cytokine. IL-12 is primarily produced by professional antigen-presenting cells (APCs) such as B-cells and dendritic cells (DCs) as well as macrophages and granulocytes and regulates T-cell and natural killer-cell responses, induces the production of interferon-gamma (IFN-gamma), favors the differentiation of T-helper 1 (Th1) cells and is an important link between innate resistance and adaptive immunity. Mechanistically, exerts its biological effects through a receptor composed of IL12R1 and IL12R2 subunits. Binding to the receptor results in the rapid tyrosine phosphorylation of a number of cellular substrates including the JAK family kinases TYK2 and JAK2. In turn, recruited STAT4 gets phosphorylated and translocates to the nucleus where it regulates cytokine/growth factor responsive genes. As part of IL-35, plays essential roles in maintaining the immune homeostasis of the liver microenvironment and also functions as an immune-suppressive cytokine. Mediates biological events through unconventional receptors composed of IL12RB2 and gp130/IL6ST heterodimers or homodimers. Signaling requires the transcription factors STAT1 and STAT4, which form a unique heterodimer that binds to distinct DNA sites. This chain is Interleukin-12 subunit alpha (IL12A), found in Equus caballus (Horse).